Reading from the N-terminus, the 428-residue chain is Trigger factor (428 aa).

The PPIase FKBP-type domain occupies 165–240; that stretch reads ADLIKLDAEG…VKEVKRMELP (76 aa).

Belongs to the FKBP-type PPIase family. Tig subfamily.

The protein resides in the cytoplasm. It catalyses the reaction [protein]-peptidylproline (omega=180) = [protein]-peptidylproline (omega=0). In terms of biological role, involved in protein export. Acts as a chaperone by maintaining the newly synthesized protein in an open conformation. Functions as a peptidyl-prolyl cis-trans isomerase. This Prosthecochloris aestuarii (strain DSM 271 / SK 413) protein is Trigger factor.